The chain runs to 341 residues: L-threonine 3-dehydrogenase (341 aa).

Cys38 is a Zn(2+) binding site. Residues Thr40 and His43 each act as charge relay system in the active site. Positions 63, 64, 93, 96, 99, and 107 each coordinate Zn(2+). Residues Ile175, Asp195, Arg200, 262–264, and 286–287 contribute to the NAD(+) site; these read LGI and IY.

Belongs to the zinc-containing alcohol dehydrogenase family. Homotetramer. Zn(2+) is required as a cofactor.

It is found in the cytoplasm. The catalysed reaction is L-threonine + NAD(+) = (2S)-2-amino-3-oxobutanoate + NADH + H(+). It functions in the pathway amino-acid degradation; L-threonine degradation via oxydo-reductase pathway; glycine from L-threonine: step 1/2. Catalyzes the NAD(+)-dependent oxidation of L-threonine to 2-amino-3-ketobutyrate. The protein is L-threonine 3-dehydrogenase of Shewanella putrefaciens (strain CN-32 / ATCC BAA-453).